Here is a 511-residue protein sequence, read N- to C-terminus: Cytochrome P450 monooxygenase prhD (511 aa).

N-linked (GlcNAc...) asparagine glycosylation is present at N7. The helical transmembrane segment at G10–L30 threads the bilayer. Residue C444 coordinates heme. N502 carries N-linked (GlcNAc...) asparagine glycosylation.

The protein belongs to the cytochrome P450 family. Heme serves as cofactor.

The protein resides in the membrane. It participates in secondary metabolite biosynthesis; terpenoid biosynthesis. Functionally, cytochrome P450 monooxygenase; part of the gene cluster that mediates the biosynthesis of paraherquonin, a meroterpenoid with a unique, highly congested hexacyclic molecular architecture. The first step of the pathway is the synthesis of 3,5-dimethylorsellinic acid (DMOA) by the polyketide synthase prhL. Synthesis of DMOA is followed by farnesylation by the prenyltransferase prhE, methylesterification by the methyl-transferase prhM, epoxidation of the prenyl chain by the flavin-dependent monooxygenase prhF, and cyclization of the farnesyl moiety by the terpene cyclase prhH, to yield the tetracyclic intermediate, protoaustinoid A. The short chain dehydrogenase prhI then oxidizes the C-3 alcohol group of the terpene cyclase product to transform protoaustinoid A into protoaustinoid B. The FAD-binding monooxygenase prhJ catalyzes the oxidation of protoaustinoid B into preaustinoid A which is further oxidized into preaustinoid A1 by FAD-binding monooxygenase phrK. Finally, prhA leads to berkeleydione via the berkeleyone B intermediate. PrhA is a multifunctional dioxygenase that first desaturates at C5-C6 to form berkeleyone B, followed by rearrangement of the A/B-ring to form the cycloheptadiene moiety in berkeleydione. Berkeleydione serves as the key intermediate for the biosynthesis of paraherquonin as well as many other meroterpenoids. The cytochrome P450 monooxygenases prhB, prhD, and prhN, as well as the isomerase prhC, are probably involved in the late stage of paraherquonin biosynthesis, after the production of berkeleydione. Especially prhC might be a multifunctional enzyme that catalyzes the D-ring expansion via intramolecular methoxy rearrangement, as well as the hydrolysis of the expanded D-ring. The sequence is that of Cytochrome P450 monooxygenase prhD from Penicillium brasilianum.